The primary structure comprises 226 residues: Large ribosomal subunit protein mL67 (226 aa).

This sequence belongs to the mitochondrion-specific ribosomal protein mL67 family. In terms of assembly, component of the mitochondrial large ribosomal subunit (mt-LSU). Mature yeast 74S mitochondrial ribosomes consist of a small (37S) and a large (54S) subunit. The 37S small subunit contains a 15S ribosomal RNA (15S mt-rRNA) and 34 different proteins. The 54S large subunit contains a 21S rRNA (21S mt-rRNA) and 46 different proteins.

It is found in the nucleus. It localises to the mitochondrion. Its function is as follows. Component of the mitochondrial ribosome (mitoribosome), a dedicated translation machinery responsible for the synthesis of mitochondrial genome-encoded proteins, including at least some of the essential transmembrane subunits of the mitochondrial respiratory chain. The mitoribosomes are attached to the mitochondrial inner membrane and translation products are cotranslationally integrated into the membrane. mL67/MHR1 also has extraribosomal functions, being involved in regulation of mitochondrial DNA recombination, maintenance and repair, and generation of homoplasmic cells. mL67/MHR1 also acts as transcription factor involved in regulation of RNA polymerase II-dependent transcription. The protein is Large ribosomal subunit protein mL67 (MHR1) of Saccharomyces cerevisiae (strain ATCC 204508 / S288c) (Baker's yeast).